The following is a 101-amino-acid chain: Pollen allergen Amb a 3 (101 aa).

The 100-residue stretch at 2-101 (KVYLVGGPEL…QKFVACVPGR (100 aa)) folds into the Phytocyanin domain. N-linked (GlcNAc...) asparagine glycosylation is present at N41. C61 and C88 are joined by a disulfide. An O-linked (Hex) serine glycan is attached at S84. Position 97 is a cysteine derivative (C97). At R101 the chain carries Blocked carboxyl end (Arg).

In terms of processing, the identity of the saccharide is not reported. The sugar attached to Ser-84 is represented simply as Hex. Post-translationally, cys-97 sulfhydryl group is modified but does not form an interchain disulfide bond.

This chain is Pollen allergen Amb a 3, found in Ambrosia artemisiifolia var. elatior (Short ragweed).